The sequence spans 290 residues: Small ribosomal subunit protein bS6 (290 aa).

The interval 208–233 (VEEAKTTAKKPAAPKMSAAERAKVDG) is disordered.

It belongs to the bacterial ribosomal protein bS6 family.

Functionally, binds together with bS18 to 16S ribosomal RNA. This chain is Small ribosomal subunit protein bS6, found in Mesoplasma florum (strain ATCC 33453 / NBRC 100688 / NCTC 11704 / L1) (Acholeplasma florum).